We begin with the raw amino-acid sequence, 60 residues long: Large ribosomal subunit protein bL32 (60 aa).

Belongs to the bacterial ribosomal protein bL32 family.

The sequence is that of Large ribosomal subunit protein bL32 from Kosmotoga olearia (strain ATCC BAA-1733 / DSM 21960 / TBF 19.5.1).